We begin with the raw amino-acid sequence, 652 residues long: Drebrin (652 aa).

Alanine 2 carries the N-acetylalanine modification. One can recognise an ADF-H domain in the interval glycine 5–serine 134. Basic and acidic residues-rich tracts occupy residues methionine 211–arginine 236 and aspartate 288–glutamate 298. 2 disordered regions span residues methionine 211–cysteine 350 and serine 371–leucine 652. The span at serine 328 to proline 340 shows a compositional bias: low complexity. Positions proline 507–proline 517 are enriched in pro residues. Acidic residues-rich tracts occupy residues glutamine 540–threonine 554 and proline 640–leucine 652.

Brain neurons.

Its subcellular location is the cytoplasm. The protein resides in the cell projection. It is found in the dendrite. It localises to the cell cortex. The protein localises to the cell junction. Its subcellular location is the growth cone. Functionally, actin cytoskeleton-organizing protein that plays a role in the formation of cell projections. Plays a role in dendritic spine morphogenesis and organization, including the localization of the dopamine receptor DRD1 to the dendritic spines. Involved in synaptic plasticity. The polypeptide is Drebrin (DBN1) (Gallus gallus (Chicken)).